A 131-amino-acid chain; its full sequence is Leptin receptor gene-related protein (131 aa).

4 helical membrane passes run 7-27, 32-52, 69-89, and 100-120; these read LVGL…GCAL, VYWP…HFIA, LAYF…IILA, and GLVL…FLVF.

It belongs to the OB-RGRP/VPS55 family.

The protein localises to the golgi apparatus membrane. Its subcellular location is the endosome membrane. Involved in protein trafficking. May be involved in the down-regulation of membrane protein levels. This is Leptin receptor gene-related protein (LEPROT) from Gallus gallus (Chicken).